Here is a 918-residue protein sequence, read N- to C-terminus: MIAAQLLAYYFTELKDDQVKKIDKYLYAMRLSDEILIDILTRFKKEMKNGLSRDYNPTASVKMLPTFVRSIPDGSEKGDFIALDLGGSSFRILRVQVNHEKNQNVSMESEIYDTPENIVHGSGTQLFDHVADCLGDFMEKKKIKDKKLPVGFTFSFPCRQSKIDEAVLITWTKRFKASGVEGADVVKLLNKAIKKRGDYDANIVAVVNDTVGTMMTCGYDDQQCEVGLIIGTGTNACYMEELRHIDLVEGDEGRMCINTEWGAFGDDGSLEDIRTEFDRELDRGSLNPGKQLFEKMVSGMYMGELVRLILVKMAKEGLLFEGRITPELLTRGKFNTSDVSAIEKDKEGIQNAKEILTRLGVEPSDVDCVSVQHICTIVSFRSANLVAATLGAILNRLRDNKGTPRLRTTVGVDGSLYKMHPQYSRRFHKTLRRLVPDSDVRFLLSESGTGKGAAMVTAVAYRLAEQHRQIEETLAHFRLSKQTLMEVKKRLRTEMEMGLRKETNSKATVKMLPSFVRSIPDGTEHGDFLALDLGGTNFRVLLVKIRSGKKRTVEMHNKIYSIPLEIMQGTGDELFDHIVSCISDFLDYMGIKGPRMPLGFTFSFPCHQTNLDCGILISWTKGFKATDCEGHDVASLLRDAVKRREEFDLDVVAVVNDTVGTMMTCAYEEPTCEIGLIVGTGTNACYMEEMKNVEMVEGNQGQMCINMEWGAFGDNGCLDDIRTDFDKVVDEYSLNSGKQRFEKMISGMYLGEIVRNILIDFTKKGFLFRGQISEPLKTRGIFETKFLSQIESDRLALLQVRAILQQLGLNSTCDDSILVKTVCGVVSKRAAQLCGAGMAAVVEKIRENRGLDHLNVTVGVDGTLYKLHPHFSRIMHQTVKELSPKCTVSFLLSEDGSGKGAALITAVGVRLRGDPSIA.

Methionine 1 is modified (N-acetylmethionine). The interval 1-10 (MIAAQLLAYY) is mitochondrial-binding peptide (MBP). Hexokinase domains are found at residues 16-458 (DDQV…MVTA) and 464-906 (AEQH…LITA). ATP is bound by residues arginine 30 and 84–89 (DLGGSS). A hexokinase small subdomain 1 region spans residues 73-207 (DGSEKGDFIA…DYDANIVAVV (135 aa)). D-glucose 6-phosphate is bound at residue 84-88 (DLGGS). D-glucose contacts are provided by residues serine 155, 172-173 (TK), and 208-209 (ND). The tract at residues 208-447 (NDTVGTMMTC…SDVRFLLSES (240 aa)) is hexokinase large subdomain 1. 2 residues coordinate D-glucose 6-phosphate: aspartate 209 and threonine 232. D-glucose-binding positions include asparagine 235, glutamate 260, and 291–294 (QLFE). Serine 337 is modified (phosphoserine). Residue 413–415 (DGS) participates in D-glucose 6-phosphate binding. 425–426 (RR) lines the ATP pocket. D-glucose 6-phosphate-binding positions include threonine 449, 532–536 (DLGGT), and serine 603. Residues 521–655 (DGTEHGDFLA…EFDLDVVAVV (135 aa)) form a hexokinase small subdomain 2 region. 532–537 (DLGGTN) contacts ATP. D-glucose-binding positions include 620 to 621 (TK) and 656 to 657 (ND). Residues 656-895 (NDTVGTMMTC…CTVSFLLSED (240 aa)) form a hexokinase large subdomain 2 region. The D-glucose 6-phosphate site is built by aspartate 657 and threonine 680. An ATP-binding site is contributed by threonine 680. Residues asparagine 683, glutamate 708, and glutamate 742 each contribute to the D-glucose site. Residues 747–748 (GM), 784–788 (TKFLS), and 863–867 (TLYKL) contribute to the ATP site. D-glucose 6-phosphate is bound by residues 861–863 (DGT) and serine 897.

It belongs to the hexokinase family. In terms of assembly, monomer. Interacts with RABL2/RABL2A; binds preferentially to GTP-bound RABL2. Interacts with VDAC1. The HK1-VDAC1 complex interacts with ATF2. Interacts (via N-terminal spermatogenic cell-specific region) with PFKM (via C-terminus). Interacts with SMAD5. Expressed in flagella of epididymal sperm.

The protein resides in the mitochondrion outer membrane. The protein localises to the cytoplasm. It localises to the cytosol. It catalyses the reaction a D-hexose + ATP = a D-hexose 6-phosphate + ADP + H(+). The enzyme catalyses D-fructose + ATP = D-fructose 6-phosphate + ADP + H(+). It carries out the reaction D-glucose + ATP = D-glucose 6-phosphate + ADP + H(+). The catalysed reaction is D-mannose + ATP = D-mannose 6-phosphate + ADP + H(+). It catalyses the reaction D-glucosamine + ATP = D-glucosamine 6-phosphate + ADP + H(+). It participates in carbohydrate metabolism; hexose metabolism. It functions in the pathway carbohydrate degradation; glycolysis; D-glyceraldehyde 3-phosphate and glycerone phosphate from D-glucose: step 1/4. With respect to regulation, hexokinase is an allosteric enzyme inhibited by its product D-glucose 6-phosphate. Hexokinase activity is inhibited by N-acetyl-D-glucosamine. Its function is as follows. Catalyzes the phosphorylation of various hexoses, such as D-glucose, D-glucosamine, D-fructose, D-mannose and 2-deoxy-D-glucose, to hexose 6-phosphate (D-glucose 6-phosphate, D-glucosamine 6-phosphate, D-fructose 6-phosphate, D-mannose 6-phosphate and 2-deoxy-D-glucose 6-phosphate, respectively). Mediates the initial step of glycolysis by catalyzing phosphorylation of D-glucose to D-glucose 6-phosphate. Involved in innate immunity and inflammation by acting as a pattern recognition receptor for bacterial peptidoglycan. When released in the cytosol, N-acetyl-D-glucosamine component of bacterial peptidoglycan inhibits the hexokinase activity of HK1 and causes its dissociation from mitochondrial outer membrane, thereby activating the NLRP3 inflammasome. In Rattus norvegicus (Rat), this protein is Hexokinase-1.